The chain runs to 174 residues: Glyoxylase I 4 (174 aa).

Residues 13-135 form the VOC domain; sequence SLNHVSVLCR…DGFMIEICNC (123 aa). The Proton donor/acceptor role is filled by Glu131.

Belongs to the glyoxalase I family. As to expression, mostly expressed in roots, and, to a lower extent, in leaves, flowers, seeds and siliques.

Its subcellular location is the cell membrane. The protein localises to the cytoplasm. Involved in the detoxification and scavenging of methylglyoxal (MG), a cytotoxic aldehyde produced in response to primary metabolism alteration observed during biotic and abiotic stresses. Modulates cross-talk between salicylic acid (SA) and jasmonic acid (JA) signaling pathways during defense responses to pathogens such as Botrytis cinerea. This chain is Glyoxylase I 4, found in Arabidopsis thaliana (Mouse-ear cress).